A 186-amino-acid polypeptide reads, in one-letter code: Peptide deformylase (186 aa).

Cysteine 99 and histidine 141 together coordinate Fe cation. The active site involves glutamate 142. Residue histidine 145 participates in Fe cation binding.

Belongs to the polypeptide deformylase family. Requires Fe(2+) as cofactor.

It carries out the reaction N-terminal N-formyl-L-methionyl-[peptide] + H2O = N-terminal L-methionyl-[peptide] + formate. Removes the formyl group from the N-terminal Met of newly synthesized proteins. Requires at least a dipeptide for an efficient rate of reaction. N-terminal L-methionine is a prerequisite for activity but the enzyme has broad specificity at other positions. The chain is Peptide deformylase from Chlamydia felis (strain Fe/C-56) (Chlamydophila felis).